Reading from the N-terminus, the 312-residue chain is MIEFEKPNITKVDESTNYGKFVVEPLERGYGTTLGNSLRRILLSSLPGAAISSIQIDGVLHEFSTIDGVLEDVTQIILNIKKLALKMNTDEDKNIEIDVNGPAKVTAADIVADPDVEVLNPEQYICTVADGGHFHVRMTVKKGRGYVAADQNKSDDMPIGVLPIDSIFTPISRVNYQVESTRVGRRNDFDKLTLDVWTNGSISPREAISLAAKILTEHLDIFVNLTDEAKNAEIMVEKEETHKEKMLEMTIEELDLSVRSYNCLKRAGINTVQELTNKTEADMMKVRNLGRKSLEEVKNKLADLGLGLRKED.

The interval 1 to 226 is alpha N-terminal domain (alpha-NTD); that stretch reads MIEFEKPNIT…EHLDIFVNLT (226 aa). The tract at residues 243-312 is alpha C-terminal domain (alpha-CTD); sequence KEKMLEMTIE…DLGLGLRKED (70 aa).

The protein belongs to the RNA polymerase alpha chain family. In terms of assembly, homodimer. The RNAP catalytic core consists of 2 alpha, 1 beta, 1 beta' and 1 omega subunit. When a sigma factor is associated with the core the holoenzyme is formed, which can initiate transcription.

The enzyme catalyses RNA(n) + a ribonucleoside 5'-triphosphate = RNA(n+1) + diphosphate. Functionally, DNA-dependent RNA polymerase catalyzes the transcription of DNA into RNA using the four ribonucleoside triphosphates as substrates. The sequence is that of DNA-directed RNA polymerase subunit alpha from Lacticaseibacillus casei (strain BL23) (Lactobacillus casei).